The primary structure comprises 505 residues: Trans-cinnamate 4-monooxygenase (505 aa).

Residues 3–23 (LLLLEKTLLGLFIAAITAIAI) form a helical membrane-spanning segment. (E)-cinnamate contacts are provided by residues 213 to 218 (RSRLAQ) and Ala306. Cys447 provides a ligand contact to heme.

The protein belongs to the cytochrome P450 family. The cofactor is heme.

It localises to the membrane. The enzyme catalyses (E)-cinnamate + reduced [NADPH--hemoprotein reductase] + O2 = (E)-4-coumarate + oxidized [NADPH--hemoprotein reductase] + H2O + H(+). It functions in the pathway phenylpropanoid metabolism; trans-4-coumarate biosynthesis; trans-4-coumarate from trans-cinnamate: step 1/1. Catalyzes the first oxidative step of the phenylpropanoid pathway in higher plants by transforming trans-cinnamate into p-coumarate. The compounds formed by this pathway are essential components for lignification, pollination, and defense against ultraviolet light, predators and pathogens. The polypeptide is Trans-cinnamate 4-monooxygenase (CYP73A14) (Glycyrrhiza echinata (Licorice)).